A 596-amino-acid polypeptide reads, in one-letter code: Phosphoprotein (596 aa).

3 stretches are compositionally biased toward polar residues: residues 1–11 (MENNAKDNQIM), 38–66 (TDSQ…QLES), and 74–85 (ENSGSVNENRQL). 3 disordered regions span residues 1–25 (MENN…SSDI), 38–196 (TDSQ…ESIS), and 220–352 (KNTR…EEST). Residues 33–41 (EFILSTDSQ) form an N0 binding region. The span at 88 to 97 (SHERATETKN) shows a compositional bias: basic and acidic residues. A compositionally biased stretch (polar residues) spans 127–144 (ISRSSPDPNNGTQIQESI). 2 stretches are compositionally biased toward basic and acidic residues: residues 151 to 168 (EMDK…KDVP) and 233 to 249 (EDDK…EDTN). The span at 270 to 324 (TLKISTTTGESTRPQSGSQGKRITSWNILNSESGSRTESTSQNSQIPTSGKSNTV) shows a compositional bias: polar residues. Residues 331–352 (LESRIKTQKTDGKEREDTEEST) are compositionally biased toward basic and acidic residues. A multimerization region spans residues 374–441 (LDLYQDKRVV…KMDESHRRLI (68 aa)). The stretch at 416 to 436 (LNQIQNEILSLKTDLKKMDES) forms a coiled coil. Residues 442-475 (ENQKEQLSLITSLISNLKIMTERGGKKDQPENSG) form a l protein binding region.

This sequence belongs to the respirovirus P protein family. As to quaternary structure, homotetramer. Interacts (via multimerization domain) with polymerase L; this interaction forms the polymerase complex. Interacts (via N-terminus) with N0; this interaction allows P to chaperon N0 before encapsidation and form the N-P complex. Interacts (via C-terminus) with N-RNA template; this interaction positions the polymerase on the template.

Essential cofactor of the RNA polymerase L that plays a central role in the transcription and replication by forming the polymerase complex with RNA polymerase L and recruiting L to the genomic N-RNA template for RNA synthesis. Also plays a central role in the encapsidation of nascent RNA chains by forming the encapsidation complex with the nucleocapsid protein N (N-P complex). Acts as a chaperone for newly synthesized free N protein, so-called N0, allowing encapsidation of nascent RNA chains during replication. The nucleoprotein protein N prevents excessive phosphorylation of P, which leads to down-regulation of viral transcription/ replication. Participates, together with N, in the formation of viral factories (viroplasms), which are large inclusions in the host cytoplasm where replication takes place. Recruits host PI4KB and remodel the host endoplasmic reticulum membrane to form viral replication factories. This Bovine parainfluenza 3 virus (BPIV-3) protein is Phosphoprotein (P/V/D).